The chain runs to 196 residues: Large ribosomal subunit protein eL15 (196 aa).

A disordered region spans residues 159 to 196; that stretch reads RAYRGRTSAGQRGRGQQKRGKGTEHTRPSIRANDKRGK. Positions 179-196 are enriched in basic and acidic residues; the sequence is KGTEHTRPSIRANDKRGK.

Belongs to the eukaryotic ribosomal protein eL15 family.

This is Large ribosomal subunit protein eL15 from Natronomonas pharaonis (strain ATCC 35678 / DSM 2160 / CIP 103997 / JCM 8858 / NBRC 14720 / NCIMB 2260 / Gabara) (Halobacterium pharaonis).